The sequence spans 261 residues: MTHQTHAYHMVNPSPWPLTGALSALLMTSGLAMWFHFNSTILLMIGLTTNTLTMYQWWRDVIRESTFQGHHTPTVQKGLRYGMILFIISEVLFFTGFFWAFYHSSLAPTPELGGCWPPTGIHPLNPLEVPLLNTSVLLASGVSITWAHHSLMEGNRYPMLQALFITIALGVYFTLLQASEYYEAPFTISDGVYGSTFFVATGFHGLHVIIGSTFLIVCFFRQLKFHFTSNHHFGFEAAAWYWHFVDVVWLFLYVSIYWWGS.

The Mitochondrial matrix segment spans residues 1-15; that stretch reads MTHQTHAYHMVNPSP. A helical transmembrane segment spans residues 16–34; it reads WPLTGALSALLMTSGLAMW. Topologically, residues 35–40 are mitochondrial intermembrane; sequence FHFNST. Residues 41-66 form a helical membrane-spanning segment; the sequence is ILLMIGLTTNTLTMYQWWRDVIREST. Topologically, residues 67–72 are mitochondrial matrix; sequence FQGHHT. Residues 73–105 traverse the membrane as a helical segment; the sequence is PTVQKGLRYGMILFIISEVLFFTGFFWAFYHSS. Topologically, residues 106–128 are mitochondrial intermembrane; that stretch reads LAPTPELGGCWPPTGIHPLNPLE. The helical transmembrane segment at 129–152 threads the bilayer; sequence VPLLNTSVLLASGVSITWAHHSLM. The Mitochondrial matrix segment spans residues 153 to 155; that stretch reads EGN. The helical transmembrane segment at 156–183 threads the bilayer; sequence RYPMLQALFITIALGVYFTLLQASEYYE. Topologically, residues 184-190 are mitochondrial intermembrane; that stretch reads APFTISD. The chain crosses the membrane as a helical span at residues 191 to 223; it reads GVYGSTFFVATGFHGLHVIIGSTFLIVCFFRQL. The Mitochondrial matrix segment spans residues 224–232; it reads KFHFTSNHH. A helical transmembrane segment spans residues 233-256; the sequence is FGFEAAAWYWHFVDVVWLFLYVSI. The Mitochondrial intermembrane portion of the chain corresponds to 257–261; it reads YWWGS.

This sequence belongs to the cytochrome c oxidase subunit 3 family. As to quaternary structure, component of the cytochrome c oxidase (complex IV, CIV), a multisubunit enzyme composed of 14 subunits. The complex is composed of a catalytic core of 3 subunits MT-CO1, MT-CO2 and MT-CO3, encoded in the mitochondrial DNA, and 11 supernumerary subunits COX4I, COX5A, COX5B, COX6A, COX6B, COX6C, COX7A, COX7B, COX7C, COX8 and NDUFA4, which are encoded in the nuclear genome. The complex exists as a monomer or a dimer and forms supercomplexes (SCs) in the inner mitochondrial membrane with NADH-ubiquinone oxidoreductase (complex I, CI) and ubiquinol-cytochrome c oxidoreductase (cytochrome b-c1 complex, complex III, CIII), resulting in different assemblies (supercomplex SCI(1)III(2)IV(1) and megacomplex MCI(2)III(2)IV(2)).

Its subcellular location is the mitochondrion inner membrane. It catalyses the reaction 4 Fe(II)-[cytochrome c] + O2 + 8 H(+)(in) = 4 Fe(III)-[cytochrome c] + 2 H2O + 4 H(+)(out). Component of the cytochrome c oxidase, the last enzyme in the mitochondrial electron transport chain which drives oxidative phosphorylation. The respiratory chain contains 3 multisubunit complexes succinate dehydrogenase (complex II, CII), ubiquinol-cytochrome c oxidoreductase (cytochrome b-c1 complex, complex III, CIII) and cytochrome c oxidase (complex IV, CIV), that cooperate to transfer electrons derived from NADH and succinate to molecular oxygen, creating an electrochemical gradient over the inner membrane that drives transmembrane transport and the ATP synthase. Cytochrome c oxidase is the component of the respiratory chain that catalyzes the reduction of oxygen to water. Electrons originating from reduced cytochrome c in the intermembrane space (IMS) are transferred via the dinuclear copper A center (CU(A)) of subunit 2 and heme A of subunit 1 to the active site in subunit 1, a binuclear center (BNC) formed by heme A3 and copper B (CU(B)). The BNC reduces molecular oxygen to 2 water molecules using 4 electrons from cytochrome c in the IMS and 4 protons from the mitochondrial matrix. This chain is Cytochrome c oxidase subunit 3 (MT-CO3), found in Raphicerus campestris (Steenbok).